The chain runs to 346 residues: Rhomboid protein 1, mitochondrial (346 aa).

Residues 1–73 constitute a mitochondrion transit peptide; sequence MSGVSSVMLG…RFFSQTSILK (73 aa). Helical transmembrane passes span 109 to 129, 145 to 165, 203 to 223, 246 to 266, 275 to 295, and 308 to 328; these read SMTILGLSLMAGIYFGSPYLF, LVYALLGINVAVFGLWQLPKC, MLALWSFGTSLATMLGASNFF, LAIVGPSLGASGALFGVLGCF, ILLFVFPVPGGAWVAFLASVA, and FDYAAHLGGSMMGVLYGWYIS. Ser-256 acts as the Nucleophile in catalysis. Residue His-313 is part of the active site.

This sequence belongs to the peptidase S54 family.

The protein resides in the mitochondrion inner membrane. The catalysed reaction is Cleaves type-1 transmembrane domains using a catalytic dyad composed of serine and histidine that are contributed by different transmembrane domains.. In terms of biological role, mitochondrial rhomboid serine protease processing the mitochondrial membrane fusion regulator MGM1, and the cytochrome c peroxidase (CCP1). Required for TIM11 stability, ATP synthase complex assembly, mitochondrial morphology, cytochrome c (CYC1) storage and mitochondrial genome maintenance. This Saccharomyces cerevisiae (strain ATCC 204508 / S288c) (Baker's yeast) protein is Rhomboid protein 1, mitochondrial (PCP1).